Here is a 113-residue protein sequence, read N- to C-terminus: Integration host factor subunit alpha (113 aa).

Residues 88–113 (ALNGGVSDETEGADDDDDDEEGEGDE) form a disordered region. Residues 95–113 (DETEGADDDDDDEEGEGDE) show a composition bias toward acidic residues.

It belongs to the bacterial histone-like protein family. Heterodimer of an alpha and a beta chain.

In terms of biological role, this protein is one of the two subunits of integration host factor, a specific DNA-binding protein that functions in genetic recombination as well as in transcriptional and translational control. This is Integration host factor subunit alpha from Anaeromyxobacter dehalogenans (strain 2CP-C).